Here is a 215-residue protein sequence, read N- to C-terminus: Ribosomal RNA small subunit methyltransferase G (215 aa).

S-adenosyl-L-methionine is bound by residues glycine 73, leucine 78, 125-126 (AE), and arginine 140.

Belongs to the methyltransferase superfamily. RNA methyltransferase RsmG family.

The protein resides in the cytoplasm. Specifically methylates the N7 position of guanine in position 518 of 16S rRNA. This Renibacterium salmoninarum (strain ATCC 33209 / DSM 20767 / JCM 11484 / NBRC 15589 / NCIMB 2235) protein is Ribosomal RNA small subunit methyltransferase G.